A 273-amino-acid polypeptide reads, in one-letter code: Cell wall mannoprotein 1 (273 aa).

A signal peptide spans 1–17 (MRFSAIFTLGLAGTALA). A disordered region spans residues 173–247 (DVSDSAPSSS…GSASATSPPL (75 aa)). A compositionally biased stretch (low complexity) spans 177-247 (SAPSSSAGSS…GSASATSPPL (71 aa)).

The protein belongs to the cell wall mannoprotein 1 family. Post-translationally, galactomannoprotein, glycosylated.

The protein localises to the secreted. It is found in the cell wall. Its function is as follows. Constitutive protein of the cell wall. Antigen target of host humoral immune response. The polypeptide is Cell wall mannoprotein 1 (Aspergillus flavus).